The primary structure comprises 293 residues: Inner membrane ABC transporter permease protein YcjO (293 aa).

Topologically, residues 1–12 (MNRLFSGRSDMP) are periplasmic. A helical transmembrane segment spans residues 13-33 (FALLLLAPSLLLLGGLVAWPM). The Cytoplasmic portion of the chain corresponds to 34 to 77 (VSNIEISFLRLPLNPNIESTFVGVSNYVRILSDPGFWHSLWMTV). The ABC transmembrane type-1 domain occupies 73–283 (LWMTVWYTAL…IIIFAVILLT (211 aa)). The chain crosses the membrane as a helical span at residues 78–98 (WYTALVVAGSTVLGLAVAMFF). Residues 99–110 (NREFRLRKTARS) are Periplasmic-facing. The helical transmembrane segment at 111–131 (LVILSYVTPSISLVFAWKYMF) threads the bilayer. The Cytoplasmic portion of the chain corresponds to 132-135 (NNGY). Residues 136-156 (GIVNYLGVDLLHLYEQAPLWF) traverse the membrane as a helical segment. Residues 157 to 162 (DNPGSS) lie on the Periplasmic side of the membrane. A helical membrane pass occupies residues 163-183 (FVLVVLFAIWRYFPYAFISFL). The Cytoplasmic portion of the chain corresponds to 184–214 (AILQTIDKSLYEAAEMDGANAWQRFRIVTLP). A helical transmembrane segment spans residues 215 to 235 (AIMPVLATVVTLRTIWMFYMF). Residues 236-261 (ADVYLLTTKVDILGVYLYKTAFAFND) lie on the Periplasmic side of the membrane. The helical transmembrane segment at 262–282 (LGKAAAISVVLFIIIFAVILL) threads the bilayer. Residues 283–293 (TRKRVNLNGNK) are Cytoplasmic-facing.

This sequence belongs to the binding-protein-dependent transport system permease family. MalFG subfamily.

It is found in the cell inner membrane. In terms of biological role, probably part of the binding-protein-dependent transport system YcjNOP. Probably responsible for the translocation of the substrate across the membrane. In Escherichia coli (strain K12), this protein is Inner membrane ABC transporter permease protein YcjO (ycjO).